Reading from the N-terminus, the 2671-residue chain is Stalled ribosome sensor GCN1 (2671 aa).

Ala2 bears the N-acetylalanine mark. HEAT repeat units lie at residues 140-178 (NKLV…ENPG), 257-293 (EFKD…LDLS), 294-331 (QYAL…QCSD), 385-423 (CVAE…EVPK), 425-459 (LTDW…GDTL), 460-500 (LQAL…SKLS), 560-597 (SKVQ…SLGG), 599-636 (KLAN…MGKT), 700-732 (AFIT…SLSV), and 733-772 (LSPD…PAGE). Ser729 is subject to Phosphoserine. Ser786 carries the post-translational modification Phosphoserine. Positions 804 to 865 (QIIEMELKEE…EAALGLLDAI (62 aa)) form a coiled coil. HEAT repeat units follow at residues 879–918 (VLVD…TLGT), 979–1016 (SLVF…HAQL), 1035–1072 (LPRV…SSSG), 1078–1115 (FAEQ…VLPS), 1155–1192 (DLQS…RYQR), 1210–1250 (YRPP…YLDS), 1251–1289 (SQVK…AHGK), 1290–1332 (ENVN…HLDK), 1335–1372 (PKVK…AVKE), 1374–1410 (AGGM…GLGI), 1413–1451 (LKQQ…MLGK), 1455–1492 (PYVV…NLSA), 1493–1530 (HGVK…CAPK), 1534–1571 (SCLP…VIRN), 1573–1609 (EILA…HFID), 1611–1648 (PSLA…LTDQ), 1653–1690 (PYLP…GMGE), 1692–1729 (CFED…GLGV), 1731–1769 (KLEK…TFGD), 1773–1810 (PYVG…MYAE), 1812–1848 (AIAL…HISG), 1921–1958 (EILP…KLGE), 1959–1996 (KILP…STSR), 2001–2038 (FFSE…TIGH), 2039–2074 (QALE…VKSR), 2076–2108 (VLPY…LTRH), 2111–2146 (VILP…VEDD), 2147–2184 (TGHR…RSKA), 2188–2225 (SHLR…KLDA), 2259–2296 (RGVT…LTSA), 2301–2338 (PSVV…GKVG), 2339–2380 (IALK…IHVK), 2382–2417 (DPLF…GAGS), 2422–2459 (AIRK…FLTD), 2546–2583 (QLPP…EPRP), 2588–2625 (QTIK…MRRG), and 2627–2661 (ELLQ…QADS). The segment at 2260–2408 (GVTSILPVLR…GIRDTMLQAL (149 aa)) is RWDBD region. The residue at position 2276 (Ser2276) is a Phosphoserine.

It belongs to the GCN1 family. Interacts with EIF2AK4/GCN2; this interaction stimulates the EIF2AK4/GCN2 kinase activity and is impaired by IMPACT upon a variety of stress conditions, such as amino acid depletion, UV-C irradiation, proteasome inhibitor treatment and glucose deprivation. Interacts with IMPACT; this prevents the interaction of GCN1 with EIF2AK4/GCN2 and inhibits EIF2AK4/GCN2 kinase activity. Interacts with RNF14; interaction takes place following ribosome stalling and promotes recruitment of RNF14. As to expression, expressed in the hypothalamus, cortex and hippocampus.

The protein localises to the cytoplasm. Functionally, ribosome collision sensor that plays a key role in the RNF14-RNF25 translation quality control pathway, a pathway that takes place when a ribosome has stalled during translation, and which promotes ubiquitination and degradation of translation factors on stalled ribosomes. Directly binds to the ribosome and acts as a sentinel for colliding ribosomes: activated following ribosome stalling and promotes recruitment of RNF14, which directly ubiquitinates EEF1A1/eEF1A, leading to its degradation. In addition to EEF1A1/eEF1A, the RNF14-RNF25 translation quality control pathway mediates degradation of ETF1/eRF1 and ubiquitination of ribosomal protein. GCN1 also acts as a positive activator of the integrated stress response (ISR) by mediating activation of EIF2AK4/GCN2 in response to amino acid starvation. Interaction with EIF2AK4/GCN2 on translating ribosomes stimulates EIF2AK4/GCN2 kinase activity, leading to phosphorylation of eukaryotic translation initiation factor 2 (eIF-2-alpha/EIF2S1). EIF2S1/eIF-2-alpha phosphorylation converts EIF2S1/eIF-2-alpha into a global protein synthesis inhibitor, leading to a global attenuation of cap-dependent translation, and thus to a reduced overall utilization of amino acids, while concomitantly initiating the preferential translation of ISR-specific mRNAs, such as the transcriptional activator ATF4, and hence allowing ATF4-mediated reprogramming of amino acid biosynthetic gene expression to alleviate nutrient depletion. The sequence is that of Stalled ribosome sensor GCN1 from Mus musculus (Mouse).